We begin with the raw amino-acid sequence, 364 residues long: MQDRQKAQDYRALLLADTPLIDVRAPIEFEQGAMPGAINLPLMMGDERAAVGTCYKRQGADAALALGHRLVCGDIRQQRLEAWKAAYQRFPNGYLCCARGGQRSHIVQRWLKETGIDCPLIEGGYKALRQTAIQATWQLAQKPILLIGGCTGSGKTQLVRQQPNGVDLEGLARHRGSSFGRTLKPQLSQASFENKLAVELLKINARQTLKRWVLEDEGRTIGANHLPECLRERMAQAPIAVVEDPFALRLERLREEYFIRMHHDFTHAYGDEAGWQAYSEYLHHGLFAIRRRLGLQRFAELTDTLDRALAEQLSSGSTDGHMAWLVPLLNEYYDPMYRYQLEKKAANIVFRGPWQDVANWLKAQ.

Residues 14–137 (LLADTPLIDV…LRQTAIQATW (124 aa)) form the Rhodanese domain. Residue Cys97 is the S-selanylcysteine intermediate of the active site.

The protein belongs to the SelU family. In terms of assembly, monomer.

The catalysed reaction is 5-methylaminomethyl-2-thiouridine(34) in tRNA + selenophosphate + (2E)-geranyl diphosphate + H2O + H(+) = 5-methylaminomethyl-2-selenouridine(34) in tRNA + (2E)-thiogeraniol + phosphate + diphosphate. It catalyses the reaction 5-methylaminomethyl-2-thiouridine(34) in tRNA + (2E)-geranyl diphosphate = 5-methylaminomethyl-S-(2E)-geranyl-thiouridine(34) in tRNA + diphosphate. It carries out the reaction 5-methylaminomethyl-S-(2E)-geranyl-thiouridine(34) in tRNA + selenophosphate + H(+) = 5-methylaminomethyl-2-(Se-phospho)selenouridine(34) in tRNA + (2E)-thiogeraniol. The enzyme catalyses 5-methylaminomethyl-2-(Se-phospho)selenouridine(34) in tRNA + H2O = 5-methylaminomethyl-2-selenouridine(34) in tRNA + phosphate. Functionally, involved in the post-transcriptional modification of the uridine at the wobble position (U34) of tRNA(Lys), tRNA(Glu) and tRNA(Gln). Catalyzes the conversion of 2-thiouridine (S2U-RNA) to 2-selenouridine (Se2U-RNA). Acts in a two-step process involving geranylation of 2-thiouridine (S2U) to S-geranyl-2-thiouridine (geS2U) and subsequent selenation of the latter derivative to 2-selenouridine (Se2U) in the tRNA chain. The polypeptide is tRNA 2-selenouridine synthase (Salmonella paratyphi B (strain ATCC BAA-1250 / SPB7)).